The following is a 125-amino-acid chain: Snaclec botrocetin subunit beta (125 aa).

3 cysteine pairs are disulfide-bonded: cysteine 2/cysteine 13, cysteine 30/cysteine 121, and cysteine 98/cysteine 113. Positions 9–122 (YEGHCYRFFK…CTRFKNFVCE (114 aa)) constitute a C-type lectin domain.

The protein belongs to the snaclec family. In terms of assembly, heterodimer of subunits alpha and beta; disulfide-linked. Botrocetin and vWF form a soluble complex. Expressed by the venom gland.

The protein localises to the secreted. Snaclec that binds to von Willebrand factor (VWF) and induces its interaction with GPIbalpha (GP1BA) (via the vWF A1 domain), resulting in platelet aggregation. The sequence is that of Snaclec botrocetin subunit beta from Bothrops jararaca (Jararaca).